A 106-amino-acid polypeptide reads, in one-letter code: Large ribosomal subunit protein uL23 (106 aa).

It belongs to the universal ribosomal protein uL23 family. As to quaternary structure, part of the 50S ribosomal subunit. Contacts protein L29, and trigger factor when it is bound to the ribosome.

In terms of biological role, one of the early assembly proteins it binds 23S rRNA. One of the proteins that surrounds the polypeptide exit tunnel on the outside of the ribosome. Forms the main docking site for trigger factor binding to the ribosome. This chain is Large ribosomal subunit protein uL23, found in Acinetobacter baylyi (strain ATCC 33305 / BD413 / ADP1).